Reading from the N-terminus, the 327-residue chain is BarH-like 1 homeobox protein (327 aa).

Disordered stretches follow at residues 1 to 90 (MEGS…AQSR), 113 to 181 (PYSS…PRKA), and 303 to 327 (LQGASEPPPPLPPLPGVLPRAAQPR). Over residues 33–54 (RSPLELSPRSESSSDCSSPASP) the composition is skewed to low complexity. Polar residues predominate over residues 79 to 90 (QPGQLSAPAQSR). 2 stretches are compositionally biased toward basic and acidic residues: residues 133–143 (AGEDFRDKLDK) and 152–166 (SEYKVKEEGDREISS). The segment at residues 178 to 237 (PRKARTAFTDHQLAQLERSFERQKYLSVQDRMELAASLNLTDTQVKTWYQNRRTKWKRQT) is a DNA-binding region (homeobox). Over residues 308–318 (EPPPPLPPLPG) the composition is skewed to pro residues.

It belongs to the BAR homeobox family.

The protein localises to the nucleus. The protein is BarH-like 1 homeobox protein (Barhl1) of Mus musculus (Mouse).